The sequence spans 393 residues: S-adenosylmethionine synthase (393 aa).

Histidine 16 serves as a coordination point for ATP. Position 18 (aspartate 18) interacts with Mg(2+). Glutamate 44 contributes to the K(+) binding site. Residues glutamate 57 and glutamine 100 each coordinate L-methionine. Residues 100–110 (QSPDIVMGVDG) are flexible loop. ATP-binding positions include 165–167 (DAK), 231–232 (RF), aspartate 240, 246–247 (RK), and lysine 267. Aspartate 240 provides a ligand contact to L-methionine. An L-methionine-binding site is contributed by lysine 271.

The protein belongs to the AdoMet synthase family. Homotetramer; dimer of dimers. Mg(2+) is required as a cofactor. It depends on K(+) as a cofactor.

The protein localises to the cytoplasm. The enzyme catalyses L-methionine + ATP + H2O = S-adenosyl-L-methionine + phosphate + diphosphate. Its pathway is amino-acid biosynthesis; S-adenosyl-L-methionine biosynthesis; S-adenosyl-L-methionine from L-methionine: step 1/1. Functionally, catalyzes the formation of S-adenosylmethionine (AdoMet) from methionine and ATP. The overall synthetic reaction is composed of two sequential steps, AdoMet formation and the subsequent tripolyphosphate hydrolysis which occurs prior to release of AdoMet from the enzyme. This chain is S-adenosylmethionine synthase, found in Coxiella burnetii (strain Dugway 5J108-111).